Here is a 444-residue protein sequence, read N- to C-terminus: Jacalin-related lectin 42 (444 aa).

N-acetylalanine is present on alanine 2. Jacalin-type lectin domains follow at residues 2-143 (ALMV…YYIR), 146-289 (ATKS…YYAP), and 297-441 (TEKL…HVIP).

It belongs to the jacalin lectin family.

The protein is Jacalin-related lectin 42 (JAL42) of Arabidopsis thaliana (Mouse-ear cress).